We begin with the raw amino-acid sequence, 284 residues long: Cell division protein FtsQ (284 aa).

Residues 1–31 (MAQLPASMRRKRAAITSIHDKPPTRKQKLAN) lie on the Cytoplasmic side of the membrane. Residues 32–52 (AGGWVLLVIAFVVLAVGIYGL) traverse the membrane as a helical segment. The Periplasmic portion of the chain corresponds to 53 to 284 (YKVITDATVA…SIAGGTKAKP (232 aa)). The region spanning 59-128 (ATVAKLEVVG…NGIRVRVMPR (70 aa)) is the POTRA domain.

Belongs to the FtsQ/DivIB family. FtsQ subfamily. In terms of assembly, part of a complex composed of FtsB, FtsL and FtsQ.

Its subcellular location is the cell inner membrane. Its function is as follows. Essential cell division protein. May link together the upstream cell division proteins, which are predominantly cytoplasmic, with the downstream cell division proteins, which are predominantly periplasmic. May control correct divisome assembly. In Acinetobacter oleivorans (strain JCM 16667 / KCTC 23045 / DR1), this protein is Cell division protein FtsQ.